Here is a 282-residue protein sequence, read N- to C-terminus: Probable endonuclease 4 (282 aa).

Positions 71, 111, 147, 181, 184, 218, 231, 233, and 263 each coordinate Zn(2+).

It belongs to the AP endonuclease 2 family. The cofactor is Zn(2+).

It catalyses the reaction Endonucleolytic cleavage to 5'-phosphooligonucleotide end-products.. Endonuclease IV plays a role in DNA repair. It cleaves phosphodiester bonds at apurinic or apyrimidinic (AP) sites, generating a 3'-hydroxyl group and a 5'-terminal sugar phosphate. The chain is Probable endonuclease 4 from Protochlamydia amoebophila (strain UWE25).